We begin with the raw amino-acid sequence, 816 residues long: Lon protease (816 aa).

The Lon N-terminal domain maps to 27-221 (LPLLPIRDVV…KVNDLLAREH (195 aa)). 372 to 379 (GPPGVGKT) is a binding site for ATP. A Lon proteolytic domain is found at 608 to 789 (KNEVGVVNGL…DEVLKLALEK (182 aa)). Residues Ser695 and Lys738 contribute to the active site. Residues 795–816 (PKGKAKPATPKVVVRPSKEISA) are disordered. A compositionally biased stretch (low complexity) spans 800 to 809 (KPATPKVVVR).

This sequence belongs to the peptidase S16 family. Homohexamer. Organized in a ring with a central cavity.

The protein resides in the cytoplasm. The catalysed reaction is Hydrolysis of proteins in presence of ATP.. Functionally, ATP-dependent serine protease that mediates the selective degradation of mutant and abnormal proteins as well as certain short-lived regulatory proteins. Required for cellular homeostasis and for survival from DNA damage and developmental changes induced by stress. Degrades polypeptides processively to yield small peptide fragments that are 5 to 10 amino acids long. Binds to DNA in a double-stranded, site-specific manner. The polypeptide is Lon protease (Trichlorobacter lovleyi (strain ATCC BAA-1151 / DSM 17278 / SZ) (Geobacter lovleyi)).